The sequence spans 306 residues: Porphobilinogen deaminase (306 aa).

Cys-239 carries the post-translational modification S-(dipyrrolylmethanemethyl)cysteine.

This sequence belongs to the HMBS family. In terms of assembly, monomer. Dipyrromethane is required as a cofactor.

It carries out the reaction 4 porphobilinogen + H2O = hydroxymethylbilane + 4 NH4(+). The protein operates within porphyrin-containing compound metabolism; protoporphyrin-IX biosynthesis; coproporphyrinogen-III from 5-aminolevulinate: step 2/4. Functionally, tetrapolymerization of the monopyrrole PBG into the hydroxymethylbilane pre-uroporphyrinogen in several discrete steps. This Helicobacter pylori (strain ATCC 700392 / 26695) (Campylobacter pylori) protein is Porphobilinogen deaminase (hemC).